A 420-amino-acid polypeptide reads, in one-letter code: Glucose-1-phosphate adenylyltransferase (420 aa).

Residues Tyr107, Gly172, 187 to 188, and Ser205 each bind alpha-D-glucose 1-phosphate; that span reads EK.

Belongs to the bacterial/plant glucose-1-phosphate adenylyltransferase family. In terms of assembly, homotetramer.

The catalysed reaction is alpha-D-glucose 1-phosphate + ATP + H(+) = ADP-alpha-D-glucose + diphosphate. The protein operates within glycan biosynthesis; glycogen biosynthesis. Its function is as follows. Involved in the biosynthesis of ADP-glucose, a building block required for the elongation reactions to produce glycogen. Catalyzes the reaction between ATP and alpha-D-glucose 1-phosphate (G1P) to produce pyrophosphate and ADP-Glc. In Rhizobium meliloti (strain 1021) (Ensifer meliloti), this protein is Glucose-1-phosphate adenylyltransferase.